The chain runs to 432 residues: Anaerobic glycerol-3-phosphate dehydrogenase subunit B (432 aa).

This sequence belongs to the anaerobic G-3-P dehydrogenase subunit B family. As to quaternary structure, composed of a catalytic GlpA/B dimer and of membrane bound GlpC. Requires FMN as cofactor.

The enzyme catalyses a quinone + sn-glycerol 3-phosphate = dihydroxyacetone phosphate + a quinol. It functions in the pathway polyol metabolism; glycerol degradation via glycerol kinase pathway; glycerone phosphate from sn-glycerol 3-phosphate (anaerobic route): step 1/1. Its function is as follows. Conversion of glycerol 3-phosphate to dihydroxyacetone. Uses fumarate or nitrate as electron acceptor. The polypeptide is Anaerobic glycerol-3-phosphate dehydrogenase subunit B (Haemophilus influenzae (strain PittEE)).